Consider the following 283-residue polypeptide: Bifunctional protein FolD (283 aa).

Residues 165–167, Ser-190, and Ile-231 each bind NADP(+); that span reads GAS.

Belongs to the tetrahydrofolate dehydrogenase/cyclohydrolase family. Homodimer.

It catalyses the reaction (6R)-5,10-methylene-5,6,7,8-tetrahydrofolate + NADP(+) = (6R)-5,10-methenyltetrahydrofolate + NADPH. The catalysed reaction is (6R)-5,10-methenyltetrahydrofolate + H2O = (6R)-10-formyltetrahydrofolate + H(+). The protein operates within one-carbon metabolism; tetrahydrofolate interconversion. Catalyzes the oxidation of 5,10-methylenetetrahydrofolate to 5,10-methenyltetrahydrofolate and then the hydrolysis of 5,10-methenyltetrahydrofolate to 10-formyltetrahydrofolate. The chain is Bifunctional protein FolD from Bordetella bronchiseptica (strain ATCC BAA-588 / NCTC 13252 / RB50) (Alcaligenes bronchisepticus).